Reading from the N-terminus, the 218-residue chain is Small ribosomal subunit protein uS3 (218 aa).

The residue at position 1 (Met1) is an N-acetylmethionine. Residues 23–95 (LNELFTREFN…TVVLFAEKIL (73 aa)) form the KH type-2 domain.

Belongs to the universal ribosomal protein uS3 family.

The polypeptide is Small ribosomal subunit protein uS3 (rps3) (Dictyostelium discoideum (Social amoeba)).